The chain runs to 129 residues: Small ribosomal subunit protein uS11 (129 aa).

It belongs to the universal ribosomal protein uS11 family. Part of the 30S ribosomal subunit. Interacts with proteins S7 and S18. Binds to IF-3.

Its function is as follows. Located on the platform of the 30S subunit, it bridges several disparate RNA helices of the 16S rRNA. Forms part of the Shine-Dalgarno cleft in the 70S ribosome. The chain is Small ribosomal subunit protein uS11 from Hyphomonas neptunium (strain ATCC 15444).